The chain runs to 617 residues: Chaperone protein DnaK (617 aa).

T174 carries the post-translational modification Phosphothreonine; by autocatalysis. Residues 575–592 show a composition bias toward low complexity; sequence AQAQQQAQQQAQGQQGAQ. The disordered stretch occupies residues 575 to 617; that stretch reads AQAQQQAQQQAQGQQGAQTDNQTGQNDGKTIDVDYEEVDDDDK. Polar residues predominate over residues 593–602; it reads TDNQTGQNDG. Residues 607-617 show a composition bias toward acidic residues; that stretch reads VDYEEVDDDDK.

This sequence belongs to the heat shock protein 70 family.

Its function is as follows. Acts as a chaperone. The protein is Chaperone protein DnaK of Halothermothrix orenii (strain H 168 / OCM 544 / DSM 9562).